The following is a 192-amino-acid chain: MKITDAAFYISAAALSGLPDLQIPEIVFAGRSNVGKSTLLNSLAGIKGLAKTSSTPGKTRLINFFLVNKAFFFVDLPGYGFAAVGHEQHEAWKKLLTTYIERRSAITLVVLLVDSRHPAMQSDREMIDYLTYLGKPYGIVLTKDDKLTQSQRIKARRVMESSALNAEFIVNYSSFSSKARLELLAHLAQYIR.

The EngB-type G domain occupies 22–192 (QIPEIVFAGR…LLAHLAQYIR (171 aa)). GTP is bound by residues 30–37 (GRSNVGKS), 57–61 (GKTRL), 75–78 (DLPG), 142–145 (TKDD), and 172–174 (YSS). Mg(2+)-binding residues include serine 37 and threonine 59.

The protein belongs to the TRAFAC class TrmE-Era-EngA-EngB-Septin-like GTPase superfamily. EngB GTPase family. Mg(2+) serves as cofactor.

Its function is as follows. Necessary for normal cell division and for the maintenance of normal septation. This is Probable GTP-binding protein EngB from Chlorobium phaeobacteroides (strain DSM 266 / SMG 266 / 2430).